The chain runs to 490 residues: Betaine aldehyde dehydrogenase (490 aa).

3 residues coordinate K(+): S26, I27, and D93. 150-152 is an NAD(+) binding site; it reads GAW. The active-site Charge relay system is the K162. 176 to 179 serves as a coordination point for NAD(+); that stretch reads KPSE. Position 180 (V180) interacts with K(+). 230-233 lines the NAD(+) pocket; that stretch reads GTDT. L246 contacts K(+). The active-site Proton acceptor is E252. Positions 254, 286, and 387 each coordinate NAD(+). Residue C286 is the Nucleophile of the active site. C286 is subject to Cysteine sulfenic acid (-SOH). Residues K457 and G460 each contribute to the K(+) site. E464 functions as the Charge relay system in the catalytic mechanism.

Belongs to the aldehyde dehydrogenase family. In terms of assembly, dimer of dimers. Requires K(+) as cofactor.

It catalyses the reaction betaine aldehyde + NAD(+) + H2O = glycine betaine + NADH + 2 H(+). It participates in amine and polyamine biosynthesis; betaine biosynthesis via choline pathway; betaine from betaine aldehyde: step 1/1. Its function is as follows. Involved in the biosynthesis of the osmoprotectant glycine betaine. Catalyzes the irreversible oxidation of betaine aldehyde to the corresponding acid. This is Betaine aldehyde dehydrogenase from Pseudomonas syringae pv. tomato (strain ATCC BAA-871 / DC3000).